We begin with the raw amino-acid sequence, 65 residues long: NADH dehydrogenase [ubiquinone] 1 alpha subcomplex subunit 1 (65 aa).

A helical transmembrane segment spans residues 3 to 23 (LVWLEAMLPLGIIGGMLCIMG).

Belongs to the complex I NDUFA1 subunit family. Complex I is composed of at least 49 different subunits.

The protein localises to the mitochondrion inner membrane. Functionally, accessory subunit of the mitochondrial membrane respiratory chain NADH dehydrogenase (Complex I), that is believed not to be involved in catalysis. Complex I functions in the transfer of electrons from NADH to the respiratory chain. The immediate electron acceptor for the enzyme is believed to be ubiquinone. The polypeptide is NADH dehydrogenase [ubiquinone] 1 alpha subcomplex subunit 1 (Arabidopsis thaliana (Mouse-ear cress)).